The primary structure comprises 276 residues: Large ribosomal subunit protein uL2c (276 aa).

Residues 225 to 276 (AMNPVDHPHGGGEGRTPIGRKKPVTPWGYSALGKKSRKRNRYSDASILRRRE) are disordered.

This sequence belongs to the universal ribosomal protein uL2 family. In terms of assembly, part of the 50S ribosomal subunit.

The protein resides in the plastid. Its subcellular location is the chloroplast. The chain is Large ribosomal subunit protein uL2c (rpl2) from Pinus koraiensis (Korean pine).